The primary structure comprises 160 residues: Cytochrome b6-f complex subunit 4 (160 aa).

The next 3 helical transmembrane spans lie at 36-56 (LLYV…GLAV), 95-115 (LLGI…PFIE), and 131-151 (TFFM…IFPI).

This sequence belongs to the cytochrome b family. PetD subfamily. As to quaternary structure, the 4 large subunits of the cytochrome b6-f complex are cytochrome b6, subunit IV (17 kDa polypeptide, PetD), cytochrome f and the Rieske protein, while the 4 small subunits are PetG, PetL, PetM and PetN. The complex functions as a dimer.

The protein resides in the cellular thylakoid membrane. Functionally, component of the cytochrome b6-f complex, which mediates electron transfer between photosystem II (PSII) and photosystem I (PSI), cyclic electron flow around PSI, and state transitions. This Gloeothece citriformis (strain PCC 7424) (Cyanothece sp. (strain PCC 7424)) protein is Cytochrome b6-f complex subunit 4.